An 81-amino-acid polypeptide reads, in one-letter code: MSHTVKIYDTCIGCTQCVRACPTDVLEMAPWDGCKAGQVASAPRTEDCVGCKRCESACPTDFLSVRVYLGSETTRSMGLGY.

4Fe-4S ferredoxin-type domains follow at residues 2–31 and 39–68; these read SHTV…MAPW and VASA…VRVY. [4Fe-4S] cluster-binding residues include Cys-11, Cys-14, Cys-17, Cys-21, Cys-48, Cys-51, Cys-54, and Cys-58.

The eukaryotic PSI reaction center is composed of at least 11 subunits. [4Fe-4S] cluster is required as a cofactor.

It is found in the plastid. Its subcellular location is the chloroplast thylakoid membrane. It carries out the reaction reduced [plastocyanin] + hnu + oxidized [2Fe-2S]-[ferredoxin] = oxidized [plastocyanin] + reduced [2Fe-2S]-[ferredoxin]. Functionally, apoprotein for the two 4Fe-4S centers FA and FB of photosystem I (PSI); essential for photochemical activity. FB is the terminal electron acceptor of PSI, donating electrons to ferredoxin. The C-terminus interacts with PsaA/B/D and helps assemble the protein into the PSI complex. Required for binding of PsaD and PsaE to PSI. PSI is a plastocyanin/cytochrome c6-ferredoxin oxidoreductase, converting photonic excitation into a charge separation, which transfers an electron from the donor P700 chlorophyll pair to the spectroscopically characterized acceptors A0, A1, FX, FA and FB in turn. The protein is Photosystem I iron-sulfur center of Tupiella akineta (Green alga).